Here is a 262-residue protein sequence, read N- to C-terminus: Hydroxyethylthiazole kinase (262 aa).

Substrate is bound at residue M50. The ATP site is built by R125 and T171. G198 serves as a coordination point for substrate.

It belongs to the Thz kinase family. Mg(2+) is required as a cofactor.

It catalyses the reaction 5-(2-hydroxyethyl)-4-methylthiazole + ATP = 4-methyl-5-(2-phosphooxyethyl)-thiazole + ADP + H(+). It participates in cofactor biosynthesis; thiamine diphosphate biosynthesis; 4-methyl-5-(2-phosphoethyl)-thiazole from 5-(2-hydroxyethyl)-4-methylthiazole: step 1/1. Its function is as follows. Catalyzes the phosphorylation of the hydroxyl group of 4-methyl-5-beta-hydroxyethylthiazole (THZ). The chain is Hydroxyethylthiazole kinase from Escherichia coli O7:K1 (strain IAI39 / ExPEC).